A 156-amino-acid chain; its full sequence is Enhancer of split M1 protein (156 aa).

An N-terminal signal peptide occupies residues 1–19 (MMSQTLTLCCLGLVACVYG). Kazal-like domains are found at residues 23–81 (STND…AWCS) and 96–156 (KLEV…EEKC). Intrachain disulfides connect Cys29–Cys62, Cys33–Cys55, Cys102–Cys135, Cys106–Cys128, and Cys114–Cys156.

The sequence is that of Enhancer of split M1 protein from Drosophila simulans (Fruit fly).